A 526-amino-acid polypeptide reads, in one-letter code: Tyrosine-protein kinase transforming protein Src (526 aa).

The interval 1-52 (MGSSKSKPKDPSQRRHSLEPPDSTHHGGFPASQTPDETAAPDAHRNPSRSFG) is disordered. Glycine 2 carries N-myristoyl glycine; by host lipidation. The span at 7 to 25 (KPKDPSQRRHSLEPPDSTH) shows a compositional bias: basic and acidic residues. SH3 domains follow at residues 71 to 139 (TSPQ…YVAP) and 81 to 142 (GGVT…PSDS). The region spanning 148–245 (WYFGKITRRE…GLCHRLANVC (98 aa)) is the SH2 domain. The Protein kinase domain maps to 267 to 517 (LRLEAKLGQG…TFKYLQAQLL (251 aa)). ATP contacts are provided by residues 273 to 281 (LGQGCFGEV) and lysine 295. The active-site Proton acceptor is the aspartate 386. Phosphotyrosine; by autocatalysis is present on tyrosine 416.

It belongs to the protein kinase superfamily. Tyr protein kinase family. SRC subfamily. In terms of assembly, homodimer. The phosphorylated form is termed pp60v-src.

The catalysed reaction is L-tyrosyl-[protein] + ATP = O-phospho-L-tyrosyl-[protein] + ADP + H(+). This phosphoprotein, required for both the initiation and the maintenance of neoplastic transformation, is a protein kinase that catalyzes the phosphorylation of tyrosine residues in vitro. This chain is Tyrosine-protein kinase transforming protein Src (V-SRC), found in Gallus gallus (Chicken).